We begin with the raw amino-acid sequence, 310 residues long: B3 domain-containing transcription factor NGA1 (310 aa).

The segment at 1 to 26 (MMTDLSLTRDEDEEEAKPLAEEEGAR) is disordered. Residues 16-26 (AKPLAEEEGAR) show a composition bias toward basic and acidic residues. A DNA-binding region (TF-B3) is located at residues 35–141 (FDKVVTPSDV…RLFIDWRRRP (107 aa)). The segment covering 251-268 (ESGMTNSTEEESSSSGGS) has biased composition (low complexity). Residues 251 to 310 (ESGMTNSTEEESSSSGGSLPRGGGGGASSSSFFQLRLGSSSEDDHFTKKGKSSLSFDLDQ) form a disordered region.

Interacts with BRX. Interacts with BZIP30.

It localises to the nucleus. Functionally, regulates lateral organ growth. Functionally redundant with NGA2, NGA3 and NGA4. The polypeptide is B3 domain-containing transcription factor NGA1 (NGA1) (Arabidopsis thaliana (Mouse-ear cress)).